We begin with the raw amino-acid sequence, 145 residues long: Large ribosomal subunit protein uL13 (145 aa).

Belongs to the universal ribosomal protein uL13 family. In terms of assembly, part of the 50S ribosomal subunit.

In terms of biological role, this protein is one of the early assembly proteins of the 50S ribosomal subunit, although it is not seen to bind rRNA by itself. It is important during the early stages of 50S assembly. The sequence is that of Large ribosomal subunit protein uL13 from Bacillus cytotoxicus (strain DSM 22905 / CIP 110041 / 391-98 / NVH 391-98).